We begin with the raw amino-acid sequence, 322 residues long: Helix-loop-helix 34 (322 aa).

Positions 1 to 11 (METNLSEEKQK) are enriched in basic and acidic residues. The interval 1 to 23 (METNLSEEKQKPSKSQAQQRRQM) is disordered. The region spanning 8-62 (EKQKPSKSQAQQRRQMENYEFSQLANELPLARAISGQHIDKTTMVRLATAYIKLH) is the bHLH domain. PAS domains are found at residues 82–152 (DSLW…DLNW) and 203–276 (PTPV…FNLG).

As to quaternary structure, efficient DNA binding requires dimerization with another bHLH protein. Expressed in a small subset of neurons, probably AVJL and AVJR. Expressed in the AVH neurons.

Its subcellular location is the nucleus. Transcription factor. Involved in specifying AVH neuron identity, acting in concert with unc-42. Involved in serotonin-mediated feeding behavior, probably acting by modulating expression of genes involved in glutamate signaling. The chain is Helix-loop-helix 34 (hlh-34) from Caenorhabditis elegans.